The chain runs to 421 residues: Testin (421 aa).

Positions 92 to 199 (MILTNPVAAK…GDVKLPQEMD (108 aa)) constitute a PET domain. LIM zinc-binding domains are found at residues 234–297 (YSCY…CDSE), 299–359 (PRCA…NHAV), and 362–421 (QGCH…KMMS).

This sequence belongs to the prickle / espinas / testin family. Interacts via LIM domain 1 with ZYX. Interacts (via LIM domain 3) with ENAH and VASP. Interacts with ALKBH4, talin, actin, alpha-actinin, GRIP1 and PXN. Interacts (via LIM domain 2) with ACTL7A (via N-terminus). Heterodimer with ACTL7A; the heterodimer interacts with ENAH to form a heterotrimer.

It localises to the cytoplasm. The protein resides in the cell junction. Its subcellular location is the focal adhesion. In terms of biological role, scaffold protein that may play a role in cell adhesion, cell spreading and in the reorganization of the actin cytoskeleton. Plays a role in the regulation of cell proliferation. May act as a tumor suppressor. The protein is Testin (TES) of Loxodonta africana (African elephant).